The chain runs to 380 residues: Probable cytosolic iron-sulfur protein assembly protein 1 (380 aa).

7 WD repeats span residues 10–49, 56–108, 135–175, 182–221, 228–275, 299–338, and 346–380; these read AHND…KFPL, THKR…VEYD, GHEN…EEFE, DHSQ…DEWS, GHEG…EEDK, VHKY…KWVI, and HGVH…LWNV.

This sequence belongs to the WD repeat CIA1 family. Interacts with NAR1.

The protein resides in the cytoplasm. Its subcellular location is the nucleus. Essential component of the cytosolic iron-sulfur (Fe/S) protein assembly machinery. Required for the maturation of extramitochondrial Fe/S proteins. The sequence is that of Probable cytosolic iron-sulfur protein assembly protein 1 from Candida dubliniensis (strain CD36 / ATCC MYA-646 / CBS 7987 / NCPF 3949 / NRRL Y-17841) (Yeast).